A 646-amino-acid polypeptide reads, in one-letter code: MPPDLPSLLLRLVVLLLLSQAEARSFVVDREHDRFLLDGVPFRYVSGSLHYFRVPPVLWADRLLKMQLSGLNAVQFYVPWNYHEPEPGIYNFNGSRDLIAFLNEAAKVNLLVILRPGPYICAEWEMGGLPSWLLRNPNIHLRTSDPAFLEAVDSWFKVLLPKIYPFLYHNGGNIISIQVENEYGSYKACDFKYMRHLAGLFRALLGDKILLFTTDGPHGLRCGSLQGLYTTIDFGPADNVTRIFSLLREYEPHGPLVNSEYYTGWLDYWGQNHSTRSSPAVAQGLEKMLKLGASVNMYMFHGGTNFGYWNGADEKGRFLPITTSYDYDAPISEAGDPTPKLFAIRNVISKFQEIPLGPLPPPSPKMKFGPLTMSLDGNLLSFLDFLCPQGPIHSVLPLTFEAVKLDHGFMLYRTYLTSPVLEPTPFWVPNNGIHDRAYVMVDGVLKGVLERSLKQELYLTGTVGTRLDILLENMGRLSFGSNHSDFKGLLEAPLLGQTILTEWMMFPLKVDKLVKWWFPLQLMKRALPQASSVPAFYSAKFPVFGLLGDTFLYLPGWTKGQVWINGFNLGRYWTMRGPQQTLYVPRLLLFGRSINKITLLELENVPHNPQVQFLDKPILNSTLHWGYNFLLSETQGSFEPMELSGH.

Positions 1–23 (MPPDLPSLLLRLVVLLLLSQAEA) are cleaved as a signal peptide. Asn-93 is a glycosylation site (N-linked (GlcNAc...) asparagine). Residue Glu-182 is the Proton donor of the active site. N-linked (GlcNAc...) asparagine glycosylation is present at Asn-239. Glu-260 functions as the Nucleophile in the catalytic mechanism.

This sequence belongs to the glycosyl hydrolase 35 family.

The protein resides in the secreted. Its function is as follows. Probable glycosyl hydrolase. The polypeptide is Beta-galactosidase-1-like protein (Glb1l) (Mus musculus (Mouse)).